An 80-amino-acid polypeptide reads, in one-letter code: MARKKASIDFEQSLADLQALVERLENGELSLEDSLAAFEQGIALTRDCQGALAQAEQKVQILLERDGELAAQPFDAEPEA.

It belongs to the XseB family. Heterooligomer composed of large and small subunits.

Its subcellular location is the cytoplasm. The catalysed reaction is Exonucleolytic cleavage in either 5'- to 3'- or 3'- to 5'-direction to yield nucleoside 5'-phosphates.. In terms of biological role, bidirectionally degrades single-stranded DNA into large acid-insoluble oligonucleotides, which are then degraded further into small acid-soluble oligonucleotides. The sequence is that of Exodeoxyribonuclease 7 small subunit from Pseudomonas putida (strain W619).